We begin with the raw amino-acid sequence, 1309 residues long: Mediator of RNA polymerase II transcription subunit 33A (1309 aa).

Residues 809 to 829 (QTLNPVNSGTSSSSGAASEDS) form a disordered region. Low complexity predominate over residues 816-826 (SGTSSSSGAAS).

The protein belongs to the Mediator complex subunit 33 family. In terms of assembly, component of the Mediator complex.

The protein resides in the nucleus. Its function is as follows. Component of the Mediator complex, a coactivator involved in the regulated transcription of nearly all RNA polymerase II-dependent genes. Mediator functions as a bridge to convey information from gene-specific regulatory proteins to the basal RNA polymerase II transcription machinery. The Mediator complex, having a compact conformation in its free form, is recruited to promoters by direct interactions with regulatory proteins and serves for the assembly of a functional preinitiation complex with RNA polymerase II and the general transcription factors. Involved in the repression of phenylpropanoid biosynthesis. May compete with MED33B for common binding partners or for occupancy in Mediator. The polypeptide is Mediator of RNA polymerase II transcription subunit 33A (MED33A) (Arabidopsis thaliana (Mouse-ear cress)).